The chain runs to 475 residues: Enolase (475 aa).

(2R)-2-phosphoglycerate is bound at residue Q179. E221 (proton donor) is an active-site residue. D258, E312, and D339 together coordinate Mg(2+). 4 residues coordinate (2R)-2-phosphoglycerate: K364, R393, S394, and K415. The active-site Proton acceptor is K364. The segment at 454–475 is disordered; that stretch reads STPAATPKKSPAKKTTKAKSKK. The span at 463 to 475 shows a compositional bias: basic residues; that stretch reads SPAKKTTKAKSKK.

It belongs to the enolase family. Mg(2+) is required as a cofactor.

Its subcellular location is the cell membrane. It localises to the cytoplasm. The protein localises to the secreted. The protein resides in the cell surface. The catalysed reaction is (2R)-2-phosphoglycerate = phosphoenolpyruvate + H2O. It functions in the pathway carbohydrate degradation; glycolysis; pyruvate from D-glyceraldehyde 3-phosphate: step 4/5. Catalyzes the reversible conversion of 2-phosphoglycerate (2-PG) into phosphoenolpyruvate (PEP). It is essential for the degradation of carbohydrates via glycolysis. In terms of biological role, 'Moonlights' as a plasminogen receptor. Binds host (chicken) plasminogen; enolase antiserum inhibits M.gallisepticum adherence to chicken embryo fibroblasts. The sequence is that of Enolase from Mycoplasmoides gallisepticum (strain R(low / passage 15 / clone 2)) (Mycoplasma gallisepticum).